The sequence spans 494 residues: MADLANEEKPAIAPPVFVFQKDKGQKRSAGSSSPEGGEDSDREDGNYRPPVKRERTSSLTQFPPSQSEERSSGFRLKPPTLIRGQAPSAGLPSQKPKEQQRSVLRPAVLQAPQPKALSQTVPSSGTNGVSLPADCTGAVPAASPDTAARRSPAEAADEEKEPQKNESSNASGEEACEKKDPATQQAFVFGQNLRDRVKLINESMDEADMENAGHPSADTPTATNYFLQYISSSLENSTNSADASSNKFVFGQNMSERVLSPPKLNEVSSDANRENAAAESGSESSSQEATPEKESLAESAAAYTKATARKCLLEKVEVITGEEAESNVLQMQCKLFVFDKTSQSWVERGRGLLRLNDMASTDDGTLQSRLVMRTQGSLRLILNTKLWAQMQIDKASEKSIRITAMDTEDQVVKVFLISASSKDTGQLYAALHHRILALRSRVEQEQEAKMPAPEPGAAPSNEEDDSDDDDVLAPSGATAAGAGDEGDGQTTGST.

Residues 1–10 are compositionally biased toward basic and acidic residues; it reads MADLANEEKP. Disordered regions lie at residues 1–192, 259–300, and 442–494; these read MADL…FGQN, LSPP…AESA, and VEQE…TGST. Position 2 is an N-acetylalanine (A2). An N6-acetyllysine mark is found at K9 and K21. 3 positions are modified to phosphoserine: S32, S33, and S40. Residues 43 to 56 are compositionally biased toward basic and acidic residues; that stretch reads EDGNYRPPVKRERT. A Nuclear localization signal motif is present at residues 49–57; the sequence is PPVKRERTS. At T56 the chain carries Phosphothreonine. Composition is skewed to polar residues over residues 57-66 and 116-129; these read SSLTQFPPSQ and ALSQ…TNGV. S58 is modified (phosphoserine). Phosphoserine is present on residues S151, S260, S280, S282, and S299. Residues 274-289 show a composition bias toward low complexity; that stretch reads ENAAAESGSESSSQEA. The RanBD1 domain maps to 305–445; it reads KATARKCLLE…LALRSRVEQE (141 aa). Residues 461–471 are compositionally biased toward acidic residues; that stretch reads NEEDDSDDDDV. Position 466 is a phosphoserine (S466). Low complexity predominate over residues 476–494; the sequence is GATAAGAGDEGDGQTTGST.

As to quaternary structure, interacts with CHC1 in a Ran-stimulated manner. Interacts with XPO1. Interacts (via its C-terminal R domain) with SMAD2 (dephosphorylated form via its MH1 and MH2 domains); the interaction results in the nuclear export of SMAD2 and termination of the TGF-beta signaling. Interacts (via its C-terminal R domain) with SMAD3 (dephosphorylated form via its MH1 domain); the interaction results in the nuclear export of SMAD3 and termination of the TGF-beta signaling. Phosphorylation at Ser-58 promotes its import into the nucleus.

The protein resides in the cytoplasm. Its subcellular location is the nucleus. Functionally, acts as a cofactor for XPO1/CRM1-mediated nuclear export, perhaps as export complex scaffolding protein. Bound to XPO1/CRM1, stabilizes the XPO1/CRM1-cargo interaction. In the absence of Ran-bound GTP prevents binding of XPO1/CRM1 to the nuclear pore complex. Binds to CHC1/RCC1 and increases the guanine nucleotide exchange activity of CHC1/RCC1. Recruits XPO1/CRM1 to CHC1/RCC1 in a Ran-dependent manner. Negative regulator of TGF-beta signaling through interaction with the R-SMAD proteins, SMAD2 and SMAD3, and mediating their nuclear export. The sequence is that of Ran-binding protein 3 (RANBP3) from Pongo abelii (Sumatran orangutan).